Consider the following 129-residue polypeptide: M-zodatoxin-Lt8k (129 aa).

The signal sequence occupies residues 1 to 20 (MKYFVVALALVAAFACIAES). The propeptide occupies 21–60 (KPAESEHELAEVEEENELADLEDAVWLEHLADLSDLEEAR).

It belongs to the cationic peptide 06 (cytoinsectotoxin) family. Expressed by the venom gland.

Its subcellular location is the secreted. Its function is as follows. Insecticidal, cytolytic and antimicrobial peptide. Forms voltage-dependent, ion-permeable channels in membranes. At high concentration causes cell membrane lysis. This chain is M-zodatoxin-Lt8k (cit 1-10), found in Lachesana tarabaevi (Spider).